Consider the following 338-residue polypeptide: Lipoyl synthase (338 aa).

A disordered region spans residues 1-22 (MTTVQEAVPNLIPTQDVTPRPA). [4Fe-4S] cluster is bound by residues C84, C89, C95, C110, C114, C117, and S324. Residues 96–313 (FSGGTATFMI…AEEGYKMGFK (218 aa)) form the Radical SAM core domain.

It belongs to the radical SAM superfamily. Lipoyl synthase family. [4Fe-4S] cluster serves as cofactor.

The protein localises to the cytoplasm. It catalyses the reaction [[Fe-S] cluster scaffold protein carrying a second [4Fe-4S](2+) cluster] + N(6)-octanoyl-L-lysyl-[protein] + 2 oxidized [2Fe-2S]-[ferredoxin] + 2 S-adenosyl-L-methionine + 4 H(+) = [[Fe-S] cluster scaffold protein] + N(6)-[(R)-dihydrolipoyl]-L-lysyl-[protein] + 4 Fe(3+) + 2 hydrogen sulfide + 2 5'-deoxyadenosine + 2 L-methionine + 2 reduced [2Fe-2S]-[ferredoxin]. It participates in protein modification; protein lipoylation via endogenous pathway; protein N(6)-(lipoyl)lysine from octanoyl-[acyl-carrier-protein]: step 2/2. Catalyzes the radical-mediated insertion of two sulfur atoms into the C-6 and C-8 positions of the octanoyl moiety bound to the lipoyl domains of lipoate-dependent enzymes, thereby converting the octanoylated domains into lipoylated derivatives. The protein is Lipoyl synthase of Pseudomonas entomophila (strain L48).